Here is a 235-residue protein sequence, read N- to C-terminus: UPF0758 protein COPRO5265_1522 (235 aa).

Residues 109–235 (RITTPEDAIE…HVSLAREKLI (127 aa)) enclose the MPN domain. His184, His186, and Asp197 together coordinate Zn(2+). Positions 184 to 197 (HNHPSGDPSPSRED) match the JAMM motif motif.

This sequence belongs to the UPF0758 family.

In Coprothermobacter proteolyticus (strain ATCC 35245 / DSM 5265 / OCM 4 / BT), this protein is UPF0758 protein COPRO5265_1522.